The chain runs to 229 residues: Cytidylate kinase (229 aa).

ATP is bound at residue 12-20 (GPSGSGKGT).

Belongs to the cytidylate kinase family. Type 1 subfamily.

The protein resides in the cytoplasm. The enzyme catalyses CMP + ATP = CDP + ADP. It carries out the reaction dCMP + ATP = dCDP + ADP. This Pseudomonas syringae pv. syringae (strain B728a) protein is Cytidylate kinase.